The primary structure comprises 380 residues: Succinyl-diaminopimelate desuccinylase (380 aa).

His-70 contacts Zn(2+). Asp-72 is a catalytic residue. Asp-103 contacts Zn(2+). The active-site Proton acceptor is Glu-137. 3 residues coordinate Zn(2+): Glu-138, Glu-166, and His-352.

This sequence belongs to the peptidase M20A family. DapE subfamily. Homodimer. Requires Zn(2+) as cofactor. Co(2+) serves as cofactor.

The enzyme catalyses N-succinyl-(2S,6S)-2,6-diaminopimelate + H2O = (2S,6S)-2,6-diaminopimelate + succinate. Its pathway is amino-acid biosynthesis; L-lysine biosynthesis via DAP pathway; LL-2,6-diaminopimelate from (S)-tetrahydrodipicolinate (succinylase route): step 3/3. Catalyzes the hydrolysis of N-succinyl-L,L-diaminopimelic acid (SDAP), forming succinate and LL-2,6-diaminopimelate (DAP), an intermediate involved in the bacterial biosynthesis of lysine and meso-diaminopimelic acid, an essential component of bacterial cell walls. The sequence is that of Succinyl-diaminopimelate desuccinylase from Azoarcus sp. (strain BH72).